Reading from the N-terminus, the 480-residue chain is Proline--tRNA ligase (480 aa).

The protein belongs to the class-II aminoacyl-tRNA synthetase family. ProS type 3 subfamily. Homodimer.

The protein localises to the cytoplasm. It catalyses the reaction tRNA(Pro) + L-proline + ATP = L-prolyl-tRNA(Pro) + AMP + diphosphate. Its function is as follows. Catalyzes the attachment of proline to tRNA(Pro) in a two-step reaction: proline is first activated by ATP to form Pro-AMP and then transferred to the acceptor end of tRNA(Pro). This Methanosarcina mazei (strain ATCC BAA-159 / DSM 3647 / Goe1 / Go1 / JCM 11833 / OCM 88) (Methanosarcina frisia) protein is Proline--tRNA ligase.